A 350-amino-acid chain; its full sequence is Methionine import ATP-binding protein MetN (350 aa).

One can recognise an ABC transporter domain in the interval 9-245 (LKDVDVEFHG…PQQQLTKDFI (237 aa)). An ATP-binding site is contributed by 43–50 (GYSGAGKS).

Belongs to the ABC transporter superfamily. Methionine importer (TC 3.A.1.24) family. As to quaternary structure, the complex is composed of two ATP-binding proteins (MetN), two transmembrane proteins (MetI) and a solute-binding protein (MetQ).

The protein resides in the cell membrane. The enzyme catalyses L-methionine(out) + ATP + H2O = L-methionine(in) + ADP + phosphate + H(+). The catalysed reaction is D-methionine(out) + ATP + H2O = D-methionine(in) + ADP + phosphate + H(+). In terms of biological role, part of the ABC transporter complex MetNIQ involved in methionine import. Responsible for energy coupling to the transport system. This Lacticaseibacillus paracasei (strain ATCC 334 / BCRC 17002 / CCUG 31169 / CIP 107868 / KCTC 3260 / NRRL B-441) (Lactobacillus paracasei) protein is Methionine import ATP-binding protein MetN.